A 147-amino-acid chain; its full sequence is Allograft inflammatory factor 1 (147 aa).

Ser-2 is subject to N-acetylserine. Lys-11 is modified (N6-acetyllysine). Ser-39 is modified (phosphoserine). One can recognise an EF-hand 1 domain in the interval 45–80; it reads SKLEAFKTKYMEFDLNGNGDIDIMSLKRMLEKLGVP. Ca(2+)-binding residues include Asp-58, Asn-60, Asn-62, Asp-64, Glu-98, Thr-100, and Asp-105. One can recognise an EF-hand 2; degenerate domain in the interval 81–115; sequence KTHLELKKLIREVSSGSEETFSYSDFLRMMLGKRS. A disordered region spans residues 127-147; the sequence is KNKEHQKPTGPPAKKAISELP.

As to quaternary structure, homodimer (Potential). Monomer. Interacts with LCP1. As to expression, cardiac allograft, spleen and testis. Expressed by inflammatory cells (macrophages and neutrophils).

It is found in the cytoplasm. Its subcellular location is the cytoskeleton. The protein resides in the cell projection. The protein localises to the ruffle membrane. It localises to the phagocytic cup. Functionally, actin-binding protein that enhances membrane ruffling and RAC activation. Enhances the actin-bundling activity of LCP1. Binds calcium. Plays a role in RAC signaling and in phagocytosis. May play an role in macrophage activation and function. Promotes the proliferation of vascular smooth muscle cells and of T-lymphocytes. Enhances lymphocyte migration. Plays a role in vascular inflammation. The sequence is that of Allograft inflammatory factor 1 (Aif1) from Rattus norvegicus (Rat).